The sequence spans 60 residues: Cytotoxin 8 (60 aa).

Intrachain disulfides connect Cys-3–Cys-21, Cys-14–Cys-38, Cys-42–Cys-53, and Cys-54–Cys-59.

It belongs to the three-finger toxin family. Short-chain subfamily. Type IA cytotoxin sub-subfamily. As to quaternary structure, monomer in solution; Homodimer and oligomer in the presence of negatively charged lipids forming a pore with a size ranging between 20 and 30 Angstroms. As to expression, expressed by the venom gland.

The protein localises to the secreted. It is found in the target cell membrane. In terms of biological role, shows cytolytic activity on many different cells by forming pore in lipid membranes. In vivo, increases heart rate or kills the animal by cardiac arrest. In addition, it binds to heparin with high affinity, interacts with Kv channel-interacting protein 1 (KCNIP1) in a calcium-independent manner, and binds to integrin alpha-V/beta-3 (ITGAV/ITGB3) with moderate affinity. Has hemolytic activity towards human erythrocytes (EC(50)=0.074 uM) and cytolytic activity towards various cell lines. This chain is Cytotoxin 8, found in Naja naja (Indian cobra).